We begin with the raw amino-acid sequence, 351 residues long: Nicotinate-nucleotide--dimethylbenzimidazole phosphoribosyltransferase (351 aa).

Residue Glu317 is the Proton acceptor of the active site.

Belongs to the CobT family.

It carries out the reaction 5,6-dimethylbenzimidazole + nicotinate beta-D-ribonucleotide = alpha-ribazole 5'-phosphate + nicotinate + H(+). It functions in the pathway nucleoside biosynthesis; alpha-ribazole biosynthesis; alpha-ribazole from 5,6-dimethylbenzimidazole: step 1/2. Catalyzes the synthesis of alpha-ribazole-5'-phosphate from nicotinate mononucleotide (NAMN) and 5,6-dimethylbenzimidazole (DMB). This is Nicotinate-nucleotide--dimethylbenzimidazole phosphoribosyltransferase from Ectopseudomonas mendocina (strain ymp) (Pseudomonas mendocina).